Consider the following 334-residue polypeptide: Malate dehydrogenase (334 aa).

16–22 (GAAGQIA) contributes to the NAD(+) binding site. Positions 97 and 103 each coordinate substrate. Residues N110, Q117, and 134 to 136 (VGN) contribute to the NAD(+) site. Residues N136 and R167 each coordinate substrate. Catalysis depends on H192, which acts as the Proton acceptor.

Belongs to the LDH/MDH superfamily. MDH type 2 family.

It carries out the reaction (S)-malate + NAD(+) = oxaloacetate + NADH + H(+). Its function is as follows. Catalyzes the reversible oxidation of malate to oxaloacetate. In Nocardia farcinica (strain IFM 10152), this protein is Malate dehydrogenase.